We begin with the raw amino-acid sequence, 472 residues long: Ribulose bisphosphate carboxylase large chain (472 aa).

Asn-120 and Thr-170 together coordinate substrate. The Proton acceptor role is filled by Lys-172. Residue Lys-174 coordinates substrate. Residues Lys-198, Asp-200, and Glu-201 each coordinate Mg(2+). At Lys-198 the chain carries N6-carboxylysine. The active-site Proton acceptor is the His-291. Positions 292, 324, and 376 each coordinate substrate. The Interacts with RbcX2 signature appears at 461–467 (EIKFEFE).

This sequence belongs to the RuBisCO large chain family. Type I subfamily. In terms of assembly, heterohexadecamer of 8 large chains and 8 small chains; disulfide-linked. The disulfide link is formed within the large subunit homodimers. The exposed C-terminus binds in a cleft in the RbcX2 (shown with endogenous and Anabaena strain CA protein). RbcX2 is displaced by RbcS; as RbcX2 is removed RbcS mediates the ordering of an internal RbcL loop (Thr-64-Leu-70) in a catalytically active conformation. It depends on Mg(2+) as a cofactor. The disulfide bond which can form in the large chain dimeric partners within the hexadecamer appears to be associated with oxidative stress and protein turnover.

The protein localises to the carboxysome. It catalyses the reaction 2 (2R)-3-phosphoglycerate + 2 H(+) = D-ribulose 1,5-bisphosphate + CO2 + H2O. It carries out the reaction D-ribulose 1,5-bisphosphate + O2 = 2-phosphoglycolate + (2R)-3-phosphoglycerate + 2 H(+). RuBisCO catalyzes two reactions: the carboxylation of D-ribulose 1,5-bisphosphate, the primary event in carbon dioxide fixation, as well as the oxidative fragmentation of the pentose substrate in the photorespiration process. Both reactions occur simultaneously and in competition at the same active site. The polypeptide is Ribulose bisphosphate carboxylase large chain (cbbL) (Synechococcus sp. (strain ATCC 27144 / PCC 6301 / SAUG 1402/1) (Anacystis nidulans)).